The chain runs to 208 residues: uncharacterized protein (208 aa).

Disordered stretches follow at residues 74 to 117 and 181 to 208; these read FEYK…RDSP and ESKL…RKFK. Positions 184–208 are enriched in polar residues; it reads LGSSEDSGTDRFSSNTSGSSGRKFK.

This is an uncharacterized protein from Mus musculus (Mouse).